The primary structure comprises 262 residues: Ribosomal RNA small subunit methyltransferase A (262 aa).

S-adenosyl-L-methionine is bound by residues Asn-20, Leu-22, Gly-47, Glu-68, Asp-90, and Asn-110.

This sequence belongs to the class I-like SAM-binding methyltransferase superfamily. rRNA adenine N(6)-methyltransferase family. RsmA subfamily.

It is found in the cytoplasm. It carries out the reaction adenosine(1518)/adenosine(1519) in 16S rRNA + 4 S-adenosyl-L-methionine = N(6)-dimethyladenosine(1518)/N(6)-dimethyladenosine(1519) in 16S rRNA + 4 S-adenosyl-L-homocysteine + 4 H(+). Functionally, specifically dimethylates two adjacent adenosines (A1518 and A1519) in the loop of a conserved hairpin near the 3'-end of 16S rRNA in the 30S particle. May play a critical role in biogenesis of 30S subunits. The polypeptide is Ribosomal RNA small subunit methyltransferase A (Chlorobium phaeobacteroides (strain BS1)).